Reading from the N-terminus, the 282-residue chain is Elongation factor Ts (282 aa).

Residues 80–83 (TDFV) form an involved in Mg(2+) ion dislocation from EF-Tu region.

Belongs to the EF-Ts family.

Its subcellular location is the cytoplasm. Functionally, associates with the EF-Tu.GDP complex and induces the exchange of GDP to GTP. It remains bound to the aminoacyl-tRNA.EF-Tu.GTP complex up to the GTP hydrolysis stage on the ribosome. The protein is Elongation factor Ts (tsf) of Chlamydia muridarum (strain MoPn / Nigg).